Here is a 399-residue protein sequence, read N- to C-terminus: Enoyl-[acyl-carrier-protein] reductase [NADH] (399 aa).

NAD(+)-binding positions include 48-53 (GASTGY), 74-75 (FE), 111-112 (DA), and 139-140 (LA). Tyrosine 225 lines the substrate pocket. The Proton donor role is filled by tyrosine 235. NAD(+) is bound by residues lysine 244 and 274-276 (VVT).

It belongs to the TER reductase family. Monomer.

It catalyses the reaction a 2,3-saturated acyl-[ACP] + NAD(+) = a (2E)-enoyl-[ACP] + NADH + H(+). The protein operates within lipid metabolism; fatty acid biosynthesis. Involved in the final reduction of the elongation cycle of fatty acid synthesis (FAS II). Catalyzes the reduction of a carbon-carbon double bond in an enoyl moiety that is covalently linked to an acyl carrier protein (ACP). The polypeptide is Enoyl-[acyl-carrier-protein] reductase [NADH] (Yersinia pseudotuberculosis serotype O:1b (strain IP 31758)).